The following is a 243-amino-acid chain: Probable HTH-type transcriptional regulator GfsR (243 aa).

The segment at 154–179 (AAVARPDTSGSATGRTGDSSPSLALS) is disordered. Polar residues predominate over residues 161 to 178 (TSGSATGRTGDSSPSLAL). The HTH luxR-type domain maps to 171 to 236 (DSSPSLALSP…QALLRWLGHP (66 aa)). The segment at residues 195–214 (VREIAVEMRLAEKTVRNYLS) is a DNA-binding region (H-T-H motif).

It functions in the pathway antibiotic biosynthesis. In terms of biological role, probable DNA-binding protein that contributes to the control of expression of the biosynthesis operon of the 16-membered macrolide antibiotics FD-891 and FD-892. Might be a member of a two-component regulatory system; the putative sensor kinase gene is unknown. This chain is Probable HTH-type transcriptional regulator GfsR, found in Streptomyces halstedii.